Here is a 660-residue protein sequence, read N- to C-terminus: Probable serine/threonine-protein kinase CE0033 (660 aa).

The Protein kinase domain maps to 9–278 (YELGASIGSG…AEMAADLELL (270 aa)). ATP is bound by residues 15 to 23 (IGSGGMSEV) and Lys-38. The active-site Proton acceptor is the Asp-136. The segment at 288-319 (RAHVEKPDEPETVVVPQRLSTPPPPPTPAMPA) is disordered. PASTA domains lie at 377–443 (SAST…TISS), 444–512 (GREV…TVST), and 513–577 (GPSL…EISN).

The protein belongs to the protein kinase superfamily. Ser/Thr protein kinase family.

It carries out the reaction L-seryl-[protein] + ATP = O-phospho-L-seryl-[protein] + ADP + H(+). The enzyme catalyses L-threonyl-[protein] + ATP = O-phospho-L-threonyl-[protein] + ADP + H(+). This is Probable serine/threonine-protein kinase CE0033 from Corynebacterium efficiens (strain DSM 44549 / YS-314 / AJ 12310 / JCM 11189 / NBRC 100395).